The following is a 117-amino-acid chain: Large ribosomal subunit protein uL18 (117 aa).

It belongs to the universal ribosomal protein uL18 family. In terms of assembly, part of the 50S ribosomal subunit; part of the 5S rRNA/L5/L18/L25 subcomplex. Contacts the 5S and 23S rRNAs.

Functionally, this is one of the proteins that bind and probably mediate the attachment of the 5S RNA into the large ribosomal subunit, where it forms part of the central protuberance. This is Large ribosomal subunit protein uL18 from Neisseria gonorrhoeae (strain ATCC 700825 / FA 1090).